A 239-amino-acid chain; its full sequence is MKAVMLLSGGIDSSTLLYYLLDGGYEVHALTFFYGQKHSKEIESAEKVAKAAKVRHLKVDISTIHDLISYGALTGEEEVPKAFYSEEVQRRTIVPNRNMILLSIAAGYAVKIGAKEVHYAAHLSDYSIYPDCRKEFVKALDTAVYLANIWTPVEVRAPFVDMTKADIVRLGLKLGVPYELTWSCYEGGDRPCLSCGTCLERTEAFLANGVKDPLLSDEEWKNAVKIYEEMRARNEGKSD.

7 to 17 (LSGGIDSSTLL) provides a ligand contact to ATP. Positions 184, 192, 195, and 198 each coordinate Zn(2+).

Belongs to the QueC family. Zn(2+) serves as cofactor.

It catalyses the reaction 7-carboxy-7-deazaguanine + NH4(+) + ATP = 7-cyano-7-deazaguanine + ADP + phosphate + H2O + H(+). It participates in purine metabolism; 7-cyano-7-deazaguanine biosynthesis. Catalyzes the ATP-dependent conversion of 7-carboxy-7-deazaguanine (CDG) to 7-cyano-7-deazaguanine (preQ(0)). In Archaeoglobus fulgidus (strain ATCC 49558 / DSM 4304 / JCM 9628 / NBRC 100126 / VC-16), this protein is 7-cyano-7-deazaguanine synthase.